The following is a 388-amino-acid chain: Phosphopentomutase (388 aa).

Positions 11, 283, 288, 324, 325, and 336 each coordinate Mn(2+).

This sequence belongs to the phosphopentomutase family. Mn(2+) serves as cofactor.

The protein resides in the cytoplasm. The catalysed reaction is 2-deoxy-alpha-D-ribose 1-phosphate = 2-deoxy-D-ribose 5-phosphate. It catalyses the reaction alpha-D-ribose 1-phosphate = D-ribose 5-phosphate. It participates in carbohydrate degradation; 2-deoxy-D-ribose 1-phosphate degradation; D-glyceraldehyde 3-phosphate and acetaldehyde from 2-deoxy-alpha-D-ribose 1-phosphate: step 1/2. Functionally, isomerase that catalyzes the conversion of deoxy-ribose 1-phosphate (dRib-1-P) and ribose 1-phosphate (Rib-1-P) to deoxy-ribose 5-phosphate (dRib-5-P) and ribose 5-phosphate (Rib-5-P), respectively. This is Phosphopentomutase from Anaeromyxobacter dehalogenans (strain 2CP-1 / ATCC BAA-258).